The chain runs to 101 residues: Nucleoid-associated protein Cla_0113 (101 aa).

This sequence belongs to the YbaB/EbfC family. In terms of assembly, homodimer.

It localises to the cytoplasm. Its subcellular location is the nucleoid. Its function is as follows. Binds to DNA and alters its conformation. May be involved in regulation of gene expression, nucleoid organization and DNA protection. The chain is Nucleoid-associated protein Cla_0113 from Campylobacter lari (strain RM2100 / D67 / ATCC BAA-1060).